Reading from the N-terminus, the 290-residue chain is uncharacterized protein (290 aa).

Transmembrane regions (helical) follow at residues 40 to 60 (MHVILLSALFYQIINILSPVI), 80 to 100 (DAHVVSSVQSIVLICLGYTCL), 110 to 130 (LFGYSVVAGDIYALTAGYFVW), 139 to 159 (VHITGIGFVIHAIAALFVITF), 166 to 188 (MYYGPTYLSWELSTPFLNIHYFL), 200 to 220 (MINGFILIVTFICVRIAWGWF), and 238 to 260 (WALSLFYLAANMSLNCLNLFWVS). One can recognise a TLC domain in the interval 74–271 (KTRLNWDAHV…MIDAIRRRAH (198 aa)).

It is found in the endoplasmic reticulum membrane. This is an uncharacterized protein from Schizosaccharomyces pombe (strain 972 / ATCC 24843) (Fission yeast).